The primary structure comprises 144 residues: MLERETQSLEYRKEQLENKVAWLEKRVKEKEEFKKTIHAEIKSGVEPELNKLKAKADTIFEEAKRATELRDKIVAEIKEIVEVLSKLLEASEKLEGEIEEEKKVKEKLEKETEEPKMELFKPRTISLLEAIKIWGSQTEKTGEN.

Residues 48-119 adopt a coiled-coil conformation; sequence ELNKLKAKAD…KETEEPKMEL (72 aa).

This is an uncharacterized protein from Archaeoglobus fulgidus (strain ATCC 49558 / DSM 4304 / JCM 9628 / NBRC 100126 / VC-16).